Consider the following 117-residue polypeptide: NADH-ubiquinone oxidoreductase chain 3 (117 aa).

3 helical membrane-spanning segments follow: residues leucine 3 to phenylalanine 23, phenylalanine 56 to leucine 76, and proline 85 to tyrosine 105.

The protein belongs to the complex I subunit 3 family.

Its subcellular location is the mitochondrion membrane. The enzyme catalyses a ubiquinone + NADH + 5 H(+)(in) = a ubiquinol + NAD(+) + 4 H(+)(out). Core subunit of the mitochondrial membrane respiratory chain NADH dehydrogenase (Complex I) that is believed to belong to the minimal assembly required for catalysis. Complex I functions in the transfer of electrons from NADH to the respiratory chain. The immediate electron acceptor for the enzyme is believed to be ubiquinone. The polypeptide is NADH-ubiquinone oxidoreductase chain 3 (MT-ND3) (Tetraodon nigroviridis (Spotted green pufferfish)).